Reading from the N-terminus, the 148-residue chain is UPF0260 protein KPN78578_22800 (148 aa).

Belongs to the UPF0260 family.

In Klebsiella pneumoniae subsp. pneumoniae (strain ATCC 700721 / MGH 78578), this protein is UPF0260 protein KPN78578_22800.